A 258-amino-acid polypeptide reads, in one-letter code: 5'-nucleotidase SurE (258 aa).

4 residues coordinate a divalent metal cation: Asp13, Asp14, Ser44, and Asn92. Residues 237 to 258 are disordered; it reads SPLTAPHSTEHHDALDGIATEF.

The protein belongs to the SurE nucleotidase family. A divalent metal cation serves as cofactor.

The protein resides in the cytoplasm. The enzyme catalyses a ribonucleoside 5'-phosphate + H2O = a ribonucleoside + phosphate. In terms of biological role, nucleotidase that shows phosphatase activity on nucleoside 5'-monophosphates. The sequence is that of 5'-nucleotidase SurE from Halobacterium salinarum (strain ATCC 29341 / DSM 671 / R1).